The chain runs to 241 residues: MATVSMRDMLKAGVHFGHQTRYWNPKMKPFIFGARNKVHIINLEKTVPMFNEALAELNKIASRKGKILFVGTKRAASEAVKDAALSCDQFFVNHRWLGGMLTNWKTVRQSIKRLKDLETQSQDGTFDKLTKKEALMRTRELEKLENSLGGIKDMGGLPDALFVIDADHEHIAIKEANNLGIPVFAIVDTNSDPDGVDFVIPGNDDAIRAVTLYLGAVAATVREGRSQDLASQAEESFVEAE.

Belongs to the universal ribosomal protein uS2 family.

The chain is Small ribosomal subunit protein uS2 from Escherichia coli O127:H6 (strain E2348/69 / EPEC).